We begin with the raw amino-acid sequence, 438 residues long: PHAF1 protein CG7083 (438 aa).

Belongs to the PHAF1 family.

It localises to the cytoplasm. The protein resides in the preautophagosomal structure. May play a regulatory role in autophagic activity. This chain is PHAF1 protein CG7083, found in Drosophila melanogaster (Fruit fly).